Consider the following 255-residue polypeptide: Small ribosomal subunit protein eS1A (255 aa).

Positions 1–18 (MAVGKNKRLSKGKKGQKK) are enriched in basic residues. Residues 1 to 20 (MAVGKNKRLSKGKKGQKKRV) form a disordered region. A2 carries the post-translational modification N-acetylalanine; partial. Phosphothreonine is present on T245. K248 is covalently cross-linked (Glycyl lysine isopeptide (Lys-Gly) (interchain with G-Cter in ubiquitin)). T254 carries the phosphothreonine modification.

It belongs to the eukaryotic ribosomal protein eS1 family. In terms of assembly, component of the small ribosomal subunit. Mature ribosomes consist of a small (40S) and a large (60S) subunit. The 40S subunit contains about 33 different proteins and 1 molecule of RNA (18S). The 60S subunit contains about 49 different proteins and 3 molecules of RNA (25S, 5.8S and 5S).

It is found in the cytoplasm. This is Small ribosomal subunit protein eS1A from Saccharomyces cerevisiae (strain RM11-1a) (Baker's yeast).